The chain runs to 361 residues: MMDSPKKLGYHMPAEYEPHHGTLMIWPTRPGSWPFQGKAAKRAFTQIIETIAEGERVYLLVEQAYLYEAQSYLGDKVVYLDIPTNDAWARDTGPTILVNDKGKKLAVDWAFNAWGGTYDGLYQDYEEDDQVASRFAEVLEKPVYDAKPFVLEGGAIHSDGQGTILVTESCLLSPGRNPNLTKEEIENTLLESLGAEKVIWLPYGIYQDETNEHVDNVAAFVGSAELVLAWTDDENDPQYAMSKADLELLEQETDAKGCHFTIHKLPIPAVRQVVTEEDLPGYIYEEGEEERYAGERLAASYVNFYIANKAVLVPQFEDVNDQVAIDILSKCFPDRKVVGIPARDILLGGGNIHCITQQIPE.

Cys-354 (amidino-cysteine intermediate) is an active-site residue.

The protein belongs to the agmatine deiminase family.

The catalysed reaction is agmatine + H2O = N-carbamoylputrescine + NH4(+). This chain is Putative agmatine deiminase, found in Streptococcus pneumoniae (strain Taiwan19F-14).